A 425-amino-acid polypeptide reads, in one-letter code: Synaptotagmin-4 (425 aa).

Residues 1-16 (MAPITTSRVEFDEIPT) lie on the Vesicular side of the membrane. A helical membrane pass occupies residues 17-37 (VVGIFSAFGLVFTVSLFAWIC). Over 38–425 (CQRRSAKSNK…IAKWHMLCDG (388 aa)) the chain is Cytoplasmic. The disordered stretch occupies residues 127-147 (TETEKEANSPESLKSSTSLTS). Residue S135 is modified to Phosphoserine; by MAPK8. Residues 137–146 (ESLKSSTSLT) are compositionally biased toward low complexity. C2 domains follow at residues 153-274 (KLGT…MLMT) and 287-420 (GRGE…AKWH). Positions 246, 249, and 252 each coordinate Ca(2+).

It belongs to the synaptotagmin family. In terms of assembly, interacts with KIF1A; the interaction increases in presence of calcium and decreases when SYT4 is phosphorylated at Ser-135. It depends on Ca(2+) as a cofactor. Phosphorylation at Ser-135 by MAPK8/JNK1 reduces interaction with KIF1A and neuronal dense core vesicles mobility. In terms of tissue distribution, expressed in many regions of the nervous system but is undetectable in extra neural tissues.

It localises to the cytoplasmic vesicle. The protein resides in the secretory vesicle. The protein localises to the neuronal dense core vesicle membrane. In terms of biological role, synaptotagmin family member which does not bind Ca(2+). Plays a role in dendrite formation by melanocytes. Synaptotagmin family member which does not bind Ca(2+). Involved in neuronal dense core vesicles (DCVs) mobility through its interaction with KIF1A. Upon increased neuronal activity, phosphorylation by MAPK8/JNK1 destabilizes the interaction with KIF1A and captures DCVs to synapses. Plays a role in dendrite formation by melanocytes. The chain is Synaptotagmin-4 (Syt4) from Mus musculus (Mouse).